The following is a 127-amino-acid chain: Protein ApaG (127 aa).

The ApaG domain occupies 3–127; sequence DDPRYRVEVE…FVLSVPRTLH (125 aa).

The chain is Protein ApaG from Xanthomonas oryzae pv. oryzae (strain MAFF 311018).